We begin with the raw amino-acid sequence, 498 residues long: ATP synthase subunit beta, chloroplastic (498 aa).

172 to 179 contacts ATP; it reads GGAGVGKT.

It belongs to the ATPase alpha/beta chains family. As to quaternary structure, F-type ATPases have 2 components, CF(1) - the catalytic core - and CF(0) - the membrane proton channel. CF(1) has five subunits: alpha(3), beta(3), gamma(1), delta(1), epsilon(1). CF(0) has four main subunits: a(1), b(1), b'(1) and c(9-12).

The protein resides in the plastid. The protein localises to the chloroplast thylakoid membrane. The enzyme catalyses ATP + H2O + 4 H(+)(in) = ADP + phosphate + 5 H(+)(out). Its function is as follows. Produces ATP from ADP in the presence of a proton gradient across the membrane. The catalytic sites are hosted primarily by the beta subunits. The protein is ATP synthase subunit beta, chloroplastic of Schisandra sphenanthera (Southern magnolia vine).